The sequence spans 187 residues: Large ribosomal subunit protein uL5 (187 aa).

It belongs to the universal ribosomal protein uL5 family. As to quaternary structure, part of the 50S ribosomal subunit; part of the 5S rRNA/L5/L18/L25 subcomplex. Contacts the 5S rRNA and the P site tRNA. Forms a bridge to the 30S subunit in the 70S ribosome.

Functionally, this is one of the proteins that bind and probably mediate the attachment of the 5S RNA into the large ribosomal subunit, where it forms part of the central protuberance. In the 70S ribosome it contacts protein S13 of the 30S subunit (bridge B1b), connecting the 2 subunits; this bridge is implicated in subunit movement. Contacts the P site tRNA; the 5S rRNA and some of its associated proteins might help stabilize positioning of ribosome-bound tRNAs. The sequence is that of Large ribosomal subunit protein uL5 from Mycobacterium bovis (strain ATCC BAA-935 / AF2122/97).